The following is a 72-amino-acid chain: UPF0729 protein C18orf32 homolog (72 aa).

The necessary for its localzation to the endoplasmic reticulum and lipid droplets stretch occupies residues 1 to 33 (MVCIPCIVIPVLLWIFKKFLEPYIYPVVSRIWP). Positions 45 to 72 (TGKVDCKGADTNGFSTKGPTEVSDKKKD) are disordered.

The protein belongs to the UPF0729 family. In terms of assembly, interacts with DERL1 and AMFR. Post-translationally, undergoes ER-associated degradation (ERAD).

It is found in the endoplasmic reticulum. The protein resides in the lipid droplet. Its function is as follows. May activate the NF-kappa-B signaling pathway. The chain is UPF0729 protein C18orf32 homolog from Rattus norvegicus (Rat).